Reading from the N-terminus, the 462-residue chain is Trigger factor (462 aa).

The PPIase FKBP-type domain maps to 163–248; that stretch reads GDEVLFDFKG…LKEVRRVNSL (86 aa). A disordered region spans residues 442–462; it reads SMQEKQTQEPAEEKVETKEEK. A compositionally biased stretch (basic and acidic residues) spans 452-462; sequence AEEKVETKEEK.

This sequence belongs to the FKBP-type PPIase family. Tig subfamily.

The protein localises to the cytoplasm. The catalysed reaction is [protein]-peptidylproline (omega=180) = [protein]-peptidylproline (omega=0). Functionally, involved in protein export. Acts as a chaperone by maintaining the newly synthesized protein in an open conformation. Functions as a peptidyl-prolyl cis-trans isomerase. In Mycoplasmopsis synoviae (strain 53) (Mycoplasma synoviae), this protein is Trigger factor.